The sequence spans 305 residues: UDP-3-O-acyl-N-acetylglucosamine deacetylase (305 aa).

Zn(2+)-binding residues include His-79, His-238, and Asp-242. The active-site Proton donor is the His-265.

This sequence belongs to the LpxC family. Zn(2+) is required as a cofactor.

The enzyme catalyses a UDP-3-O-[(3R)-3-hydroxyacyl]-N-acetyl-alpha-D-glucosamine + H2O = a UDP-3-O-[(3R)-3-hydroxyacyl]-alpha-D-glucosamine + acetate. It functions in the pathway glycolipid biosynthesis; lipid IV(A) biosynthesis; lipid IV(A) from (3R)-3-hydroxytetradecanoyl-[acyl-carrier-protein] and UDP-N-acetyl-alpha-D-glucosamine: step 2/6. Functionally, catalyzes the hydrolysis of UDP-3-O-myristoyl-N-acetylglucosamine to form UDP-3-O-myristoylglucosamine and acetate, the committed step in lipid A biosynthesis. This chain is UDP-3-O-acyl-N-acetylglucosamine deacetylase, found in Shigella dysenteriae serotype 1 (strain Sd197).